A 158-amino-acid polypeptide reads, in one-letter code: Large ribosomal subunit protein uL16 (158 aa).

It belongs to the universal ribosomal protein uL16 family. As to quaternary structure, part of the 50S ribosomal subunit.

In terms of biological role, binds 23S rRNA and is also seen to make contacts with the A and possibly P site tRNAs. This is Large ribosomal subunit protein uL16 from Synechococcus sp. (strain CC9902).